The chain runs to 676 residues: Methionine--tRNA ligase (676 aa).

Positions P15–H25 match the 'HIGH' region motif. Residues C146, C149, C159, and C162 each contribute to the Zn(2+) site. The short motif at K332–S336 is the 'KMSKS' region element. Position 335 (K335) interacts with ATP. Positions D575–K676 constitute a tRNA-binding domain.

It belongs to the class-I aminoacyl-tRNA synthetase family. MetG type 1 subfamily. As to quaternary structure, homodimer. The cofactor is Zn(2+).

The protein localises to the cytoplasm. The catalysed reaction is tRNA(Met) + L-methionine + ATP = L-methionyl-tRNA(Met) + AMP + diphosphate. In terms of biological role, is required not only for elongation of protein synthesis but also for the initiation of all mRNA translation through initiator tRNA(fMet) aminoacylation. In Shewanella sp. (strain MR-7), this protein is Methionine--tRNA ligase.